A 322-amino-acid chain; its full sequence is GTP 3',8-cyclase (322 aa).

The Radical SAM core domain maps to 5–217; the sequence is SYGRVVDYLR…DIISKKYNIK (213 aa). Arg-14 lines the GTP pocket. [4Fe-4S] cluster contacts are provided by Cys-21 and Cys-25. Tyr-27 serves as a coordination point for S-adenosyl-L-methionine. Residue Cys-28 coordinates [4Fe-4S] cluster. GTP is bound at residue Arg-64. Gly-68 is a binding site for S-adenosyl-L-methionine. Thr-95 lines the GTP pocket. Ser-119 is an S-adenosyl-L-methionine binding site. Lys-155 serves as a coordination point for GTP. Met-189 serves as a coordination point for S-adenosyl-L-methionine. Positions 249 and 252 each coordinate [4Fe-4S] cluster. GTP is bound at residue 254–256; the sequence is RLR. Cys-266 contributes to the [4Fe-4S] cluster binding site.

It belongs to the radical SAM superfamily. MoaA family. As to quaternary structure, monomer and homodimer. It depends on [4Fe-4S] cluster as a cofactor.

It carries out the reaction GTP + AH2 + S-adenosyl-L-methionine = (8S)-3',8-cyclo-7,8-dihydroguanosine 5'-triphosphate + 5'-deoxyadenosine + L-methionine + A + H(+). It functions in the pathway cofactor biosynthesis; molybdopterin biosynthesis. Functionally, catalyzes the cyclization of GTP to (8S)-3',8-cyclo-7,8-dihydroguanosine 5'-triphosphate. The chain is GTP 3',8-cyclase from Campylobacter fetus subsp. fetus (strain 82-40).